We begin with the raw amino-acid sequence, 116 residues long: Large ribosomal subunit protein bL19c (116 aa).

The protein belongs to the bacterial ribosomal protein bL19 family.

The protein resides in the plastid. The protein localises to the chloroplast. In Cyanidium caldarium (Red alga), this protein is Large ribosomal subunit protein bL19c.